The following is a 444-amino-acid chain: Chitinase-like protein Idgf1 (444 aa).

Residues 1–20 (MTSLLFVILNIILTLHLCAG) form the signal peptide. The region spanning 29–444 (KRLICYYDAQ…PILRSVRGHL (416 aa)) is the GH18 domain. Cys33 and Cys60 are joined by a disulfide. 3 N-linked (GlcNAc...) asparagine glycosylation sites follow: Asn213, Asn225, and Asn335. The cysteines at positions 346 and 429 are disulfide-linked.

Belongs to the glycosyl hydrolase 18 family. IDGF subfamily. Glycosylated.

It localises to the secreted. Cooperates with insulin-like peptides to stimulate the proliferation, polarization and motility of imaginal disk cells. May act by stabilizing the binding of insulin-like peptides to its receptor through a simultaneous interaction with both molecules to form a multiprotein signaling complex. The protein is Chitinase-like protein Idgf1 (Idgf1) of Glossina morsitans morsitans (Savannah tsetse fly).